Here is a 355-residue protein sequence, read N- to C-terminus: Phenylalanine--tRNA ligase alpha subunit (355 aa).

Glu-273 contacts Mg(2+).

This sequence belongs to the class-II aminoacyl-tRNA synthetase family. Phe-tRNA synthetase alpha subunit type 1 subfamily. As to quaternary structure, tetramer of two alpha and two beta subunits. Requires Mg(2+) as cofactor.

It is found in the cytoplasm. The enzyme catalyses tRNA(Phe) + L-phenylalanine + ATP = L-phenylalanyl-tRNA(Phe) + AMP + diphosphate + H(+). This chain is Phenylalanine--tRNA ligase alpha subunit, found in Bifidobacterium longum (strain NCC 2705).